The primary structure comprises 225 residues: UPF0700 transmembrane protein RA0705 (225 aa).

Transmembrane regions (helical) follow at residues 17-37 (VGLA…AIGL), 66-86 (GLLL…GVMI), 95-115 (ALLF…QPEL), 117-137 (FVSL…IEGL), 168-188 (IIQI…AVLV), and 194-214 (LALW…FQIP).

It belongs to the UPF0700 family.

Its subcellular location is the cell membrane. This Rhizobium meliloti (strain 1021) (Ensifer meliloti) protein is UPF0700 transmembrane protein RA0705.